We begin with the raw amino-acid sequence, 494 residues long: UPF0371 protein spr0309 (494 aa).

It belongs to the UPF0371 family.

The protein is UPF0371 protein spr0309 of Streptococcus pneumoniae (strain ATCC BAA-255 / R6).